A 156-amino-acid chain; its full sequence is Deoxyuridine 5'-triphosphate nucleotidohydrolase (156 aa).

Residues arginine 76–glycine 78, asparagine 89, threonine 93–aspartate 95, and lysine 103 contribute to the substrate site.

It belongs to the dUTPase family. Mg(2+) serves as cofactor.

The catalysed reaction is dUTP + H2O = dUMP + diphosphate + H(+). It participates in pyrimidine metabolism; dUMP biosynthesis; dUMP from dCTP (dUTP route): step 2/2. This enzyme is involved in nucleotide metabolism: it produces dUMP, the immediate precursor of thymidine nucleotides and it decreases the intracellular concentration of dUTP so that uracil cannot be incorporated into DNA. In Rhizobium leguminosarum bv. trifolii (strain WSM2304), this protein is Deoxyuridine 5'-triphosphate nucleotidohydrolase.